The primary structure comprises 696 residues: D-(-)-3-hydroxybutyrate oligomer hydrolase (696 aa).

Residues 1-26 (MTKLGWGRRVVWGAALAAVAMLGACN) form the signal peptide. Residue serine 309 is the Charge relay system of the active site.

It belongs to the D-(-)-3-hydroxybutyrate oligomer hydrolase family.

Its subcellular location is the secreted. The enzyme catalyses (3R)-hydroxybutanoate dimer + H2O = 2 (R)-3-hydroxybutanoate + H(+). The protein operates within lipid metabolism; butanoate metabolism. Functionally, participates in the degradation of poly-3-hydroxybutyrate (PHB). It works downstream of poly(3-hydroxybutyrate) depolymerase, hydrolyzing D(-)-3-hydroxybutyrate oligomers of various length (3HB-oligomers) into 3HB-monomers. The protein is D-(-)-3-hydroxybutyrate oligomer hydrolase of Burkholderia cenocepacia (strain HI2424).